The sequence spans 859 residues: METRSGGSGSASGGGGGGRMRLRKTESAEMRWVVSGGAYEEDEIESSDGGGGTPAAASGSRGGCSDSDDNYEEAEMLRQRLVRTGPRADSLDVEAQDVAGMNRHQEITVGRSIVLAVQTLGVVFGDVGTSPLYAFDVMFNKYPITSKEDVLGALSLVIYTLILIPLLKYTLIALWGNDDGEGGTFALYSLICRNARVSLLPNQLRSDTRISSFQLQVPSVELERSLKIKERLETSSMLKKLLLMLVLFGTSMVIADGVVTPAMSVMSAVNGLKVGISSVNEGEVVMITVAVLIVLFTLQRFGSSKVALAVGPALFIWFCCLAGIGIYNMKTYGSAVLQAFNPMYIYYYFERNPTQAWMSLGGCLLCATGSEAMFADLCYFSVKSVQLTFVFLVLPCLLLGYLGQAAFLMENLTENQQVFFLSIPNQAFWPVVFIAILAAIIASRTMTTAIFSTIKQATALGCFPRLKIIHTSRSFMGQIYIPMMNWFLLVSCLAFVTMFGSINEIGNAYGIAELGVMMMTTVLVTIIMLLIWQINIIVVLCFLTLSLGLELIFFSSVLGSVADGSWVLLVFAAVLYLIMYIWNYGTKLKYETEVKQKLSMDLLMELGCNLGTVRVPGIGLLYNELARGVPGIFGQFLATMPAIHSMIIFVCIKWVPVPVVPQNERFLFRRVCPKSYHMFRCIARYGYKDIRKEDYISFQQLLIESLEKFMRREAQERSLESDQYDGTDSEEEVASASSRALVGPNGSINSLGVPPAEAAGTTEHPTIGSSMSFDGSLDEAIDGRGSLDDELSFIHKAKESGVVYLLGHGDIRARKESFFVKKLVINYFYAFLRRNCRRGIAALSIPPSRMMQVAMQYMV.

Positions 1-19 are enriched in gly residues; sequence METRSGGSGSASGGGGGGR. Residues 1–69 form a disordered region; sequence METRSGGSGS…SRGGCSDSDD (69 aa). Topologically, residues 1 to 112 are cytoplasmic; it reads METRSGGSGS…RHQEITVGRS (112 aa). A compositionally biased stretch (low complexity) spans 54–65; it reads PAAASGSRGGCS. Residues 113 to 133 traverse the membrane as a helical segment; sequence IVLAVQTLGVVFGDVGTSPLY. Topologically, residues 134-155 are extracellular; that stretch reads AFDVMFNKYPITSKEDVLGALS. The chain crosses the membrane as a helical span at residues 156–176; the sequence is LVIYTLILIPLLKYTLIALWG. Residues 177 to 240 lie on the Cytoplasmic side of the membrane; that stretch reads NDDGEGGTFA…RLETSSMLKK (64 aa). A helical transmembrane segment spans residues 241–261; that stretch reads LLLMLVLFGTSMVIADGVVTP. Residues 262-275 lie on the Extracellular side of the membrane; the sequence is AMSVMSAVNGLKVG. The helical transmembrane segment at 276–296 threads the bilayer; sequence ISSVNEGEVVMITVAVLIVLF. At 297-305 the chain is on the cytoplasmic side; sequence TLQRFGSSK. A helical transmembrane segment spans residues 306-326; sequence VALAVGPALFIWFCCLAGIGI. Residues 327-359 lie on the Extracellular side of the membrane; it reads YNMKTYGSAVLQAFNPMYIYYYFERNPTQAWMS. A helical membrane pass occupies residues 360 to 380; the sequence is LGGCLLCATGSEAMFADLCYF. The Cytoplasmic portion of the chain corresponds to 381–388; the sequence is SVKSVQLT. A helical transmembrane segment spans residues 389 to 409; that stretch reads FVFLVLPCLLLGYLGQAAFLM. Over 410–417 the chain is Extracellular; it reads ENLTENQQ. Asn-411 carries N-linked (GlcNAc...) asparagine glycosylation. A helical transmembrane segment spans residues 418 to 438; it reads VFFLSIPNQAFWPVVFIAILA. The Cytoplasmic segment spans residues 439–478; that stretch reads AIIASRTMTTAIFSTIKQATALGCFPRLKIIHTSRSFMGQ. The chain crosses the membrane as a helical span at residues 479–499; that stretch reads IYIPMMNWFLLVSCLAFVTMF. The Extracellular segment spans residues 500–508; it reads GSINEIGNA. A helical membrane pass occupies residues 509–531; that stretch reads YGIAELGVMMMTTVLVTIIMLLI. The Cytoplasmic portion of the chain corresponds to 532–535; sequence WQIN. Residues 536 to 558 traverse the membrane as a helical segment; it reads IIVVLCFLTLSLGLELIFFSSVL. Residues 559–560 lie on the Extracellular side of the membrane; the sequence is GS. A helical transmembrane segment spans residues 561 to 581; it reads VADGSWVLLVFAAVLYLIMYI. Topologically, residues 582–859 are cytoplasmic; that stretch reads WNYGTKLKYE…MMQVAMQYMV (278 aa). Positions 752-772 are disordered; that stretch reads GVPPAEAAGTTEHPTIGSSMS. The segment covering 763–772 has biased composition (polar residues); it reads EHPTIGSSMS.

It belongs to the HAK/KUP transporter (TC 2.A.72.3) family.

Its subcellular location is the membrane. Its function is as follows. High-affinity potassium transporter. The protein is Probable potassium transporter 14 (HAK14) of Oryza sativa subsp. japonica (Rice).